The following is a 652-amino-acid chain: Forkhead box protein O1-A (652 aa).

Disordered stretches follow at residues 1 to 57 (MADA…EPSS), 208 to 277 (SSWW…NSHS), and 359 to 406 (NLLS…QQTQ). Over residues 41–57 (DSNTSSPAPSVKQEPSS) the composition is skewed to polar residues. Residues 134 to 228 (WGNMSYADLI…KSGKSPRRRA (95 aa)) constitute a DNA-binding region (fork-head). A compositionally biased stretch (basic residues) spans 238 to 249 (AKSRGRAAKKKL). Positions 362 to 397 (SPKNPSTGGPGSGSNQSSPSSLMQASPGYSPYSSPG) are enriched in low complexity.

It localises to the cytoplasm. The protein resides in the nucleus. Its function is as follows. Transcription factor that regulates metabolic homeostasis in response to oxidative stress. Binds to the consensus sequence 5'-TT[G/A]TTTTG-3' and the related Daf-16 family binding element (DBE) with consensus sequence 5'-TT[G/A]TTTAC-3'. Main regulator of redox balance and osteoblast numbers and controls bone mass. Orchestrates the endocrine function of the skeleton in regulating glucose metabolism. May be involved in regulating cellular homeostasis in the eye. May act as a positive regulator of apoptosis in cardiac smooth muscle cells as a result of its transcriptional activation of pro-apoptotic genes. In Danio rerio (Zebrafish), this protein is Forkhead box protein O1-A (foxo1a).